The primary structure comprises 92 residues: Large ribosomal subunit protein bL27 (92 aa).

Residues 1 to 9 (MLVMNLQYF) constitute a propeptide that is removed on maturation.

Belongs to the bacterial ribosomal protein bL27 family. Post-translationally, the N-terminus is cleaved by ribosomal processing cysteine protease Prp.

The protein is Large ribosomal subunit protein bL27 of Heliobacterium modesticaldum (strain ATCC 51547 / Ice1).